Reading from the N-terminus, the 883-residue chain is Histidine--tRNA ligase, cytoplasmic (883 aa).

Belongs to the class-II aminoacyl-tRNA synthetase family.

The protein localises to the cytoplasm. It is found in the cytosol. It catalyses the reaction tRNA(His) + L-histidine + ATP = L-histidyl-tRNA(His) + AMP + diphosphate + H(+). The protein is Histidine--tRNA ligase, cytoplasmic of Arabidopsis thaliana (Mouse-ear cress).